A 187-amino-acid chain; its full sequence is Biphenyl 2,3-dioxygenase subunit beta (187 aa).

This sequence belongs to the bacterial ring-hydroxylating dioxygenase beta subunit family. In terms of assembly, heterohexamer consisting of three BphA1 subunits and three BphA2 subunits. The multicomponent biphenyl dioxygenase system is composed of a ferredoxin reductase (BphA4), a ferredoxin (BphA3), and a terminal oxygenase (BphA1A2).

The enzyme catalyses biphenyl + NADH + O2 + H(+) = (2R,3S)-3-phenylcyclohexa-3,5-diene-1,2-diol + NAD(+). Its pathway is xenobiotic degradation; biphenyl degradation; 2-hydroxy-2,4-pentadienoate and benzoate from biphenyl: step 1/4. In terms of biological role, part of the oxygenase component of the biphenyl dioxygenase system that catalyzes the stereospecific dihydroxylation of the aromatic ring of biphenyl, yielding a dihydrodiol compound. Is likely involved in biphenyl degradation that allows growth of Rhodococcus sp. strain RHA1 on biphenyl as the sole source of carbon and energy. Can also use naphtalene and 4-chlorobiphenyl (4-CB) as substrates, as well as some polychlorinated biphenyls (PCB) such as 2,2'-dichlorobiphenyl, 2,3-dichlorobiphenyl and 2,5,2'-trichlorobiphenyl. Exhibits weak activity toward dibenzofuran and dibenzo-p-dioxin. Electrons are transferred from NADH to the [2Fe-2S] cluster in BphA1 via FAD of BphA4 and [2Fe-2S] cluster of BphA3. In Rhodococcus jostii (strain RHA1), this protein is Biphenyl 2,3-dioxygenase subunit beta.